Reading from the N-terminus, the 426-residue chain is MDSKLLLVTQSGSVDDLYSLIQAAPDILQKVDVLPIIHTPLHEASSAGKLDLAMELMILKPSFAKKLNEYGLSPLHLAVENDQVELALELVKVDPSLVRIRGRGGMTPLHLVAKKGDVDLLTDFLLACPESIKDVNVNGETILHITIMNDKYEQLKVLTGWMQKMRDSDDVFIDVLNRRDRGGNTVLHLAAYENNDKVVKQLVKCLSLDRNIQNKSGMTALDVLRARGSHMNKEIEEIIQMSGGKTGGSLSGIQEWYIFLREPVTFKEHCKTRIARYRSRISDGSRNALLVIAALIISATFQTAAQLLDKEKLDKVKKNGMRFSEFQLWGCNTVAFSIAILFSFILLPVGRAYEWWYFIITVPLVFSYFLLMYMMHGLSFFFLIIYEGGLFLVYLLVLYVKWKRCTQMKVRKPKSDLISDNFKNMV.

6 ANK repeats span residues 1-29 (MDSK…DILQ), 36-65 (IIHT…SFAK), 70-99 (YGLS…SLVR), 104-134 (GGMT…SIKD), 138-167 (NGET…KMRD), and 182-212 (GGNT…DRNI). A run of 4 helical transmembrane segments spans residues 288–308 (ALLV…AQLL), 329–349 (WGCN…LLPV), 355–375 (WWYF…MYMM), and 380–400 (FFFL…VLYV).

The protein resides in the cell membrane. Functionally, involved in plant defense. Required for basal resistance against Pseudomonas syringae pv. tomato DC3000. Required for resistance against nonpathogenic bacteria. May be involved in signaling components that function downstream of SNC2 and upstream of NPR1 and WRKY70 to regulate defense responses. This is Ankyrin repeat-containing protein BDA1 from Arabidopsis thaliana (Mouse-ear cress).